Here is a 141-residue protein sequence, read N- to C-terminus: ATP synthase epsilon chain (141 aa).

It belongs to the ATPase epsilon chain family. In terms of assembly, F-type ATPases have 2 components, CF(1) - the catalytic core - and CF(0) - the membrane proton channel. CF(1) has five subunits: alpha(3), beta(3), gamma(1), delta(1), epsilon(1). CF(0) has three main subunits: a, b and c.

It localises to the cell inner membrane. Its function is as follows. Produces ATP from ADP in the presence of a proton gradient across the membrane. The chain is ATP synthase epsilon chain from Bordetella avium (strain 197N).